A 204-amino-acid polypeptide reads, in one-letter code: Auxin-binding protein 4 (204 aa).

Residues 1–41 (MVRRRPATGAAPRPHLAAVGRGLLLASVLAAAASSLPVAES) form the signal peptide. Residues cysteine 43 and cysteine 196 are joined by a disulfide bond. The Zn(2+) site is built by histidine 98, histidine 100, and glutamate 104. Asparagine 136 is a glycosylation site (N-linked (GlcNAc...) asparagine). Histidine 147 lines the Zn(2+) pocket. A Prevents secretion from ER motif is present at residues 201–204 (KDEL).

As to quaternary structure, homodimer.

Its subcellular location is the endoplasmic reticulum lumen. Functionally, this is probably a receptor for the plant hormone auxin. In Zea mays (Maize), this protein is Auxin-binding protein 4 (ABP4).